The sequence spans 142 residues: Clock-controlled protein 6 (142 aa).

This sequence belongs to the SED1 family.

The sequence is that of Clock-controlled protein 6 (ccg-6) from Neurospora crassa (strain ATCC 24698 / 74-OR23-1A / CBS 708.71 / DSM 1257 / FGSC 987).